Reading from the N-terminus, the 347-residue chain is Protein-glutamate methylesterase/protein-glutamine glutaminase 2 (347 aa).

Residues 2 to 119 form the Response regulatory domain; it reads RVMIVDDSAV…LGGADLYRKD (118 aa). Asp-52 carries the 4-aspartylphosphate modification. Residues 131 to 153 are disordered; that stretch reads AARPAPPQAAPRPTLAPPSSDPA. The span at 134–150 shows a compositional bias: pro residues; the sequence is PAPPQAAPRPTLAPPSS. In terms of domain architecture, CheB-type methylesterase spans 152-346; sequence PAGPIEAVVV…PYIASRARSV (195 aa). Catalysis depends on residues Ser-164, His-191, and Asp-288.

Belongs to the CheB family. In terms of processing, phosphorylated by CheA. Phosphorylation of the N-terminal regulatory domain activates the methylesterase activity.

It localises to the cytoplasm. It catalyses the reaction [protein]-L-glutamate 5-O-methyl ester + H2O = L-glutamyl-[protein] + methanol + H(+). It carries out the reaction L-glutaminyl-[protein] + H2O = L-glutamyl-[protein] + NH4(+). In terms of biological role, involved in chemotaxis. Part of a chemotaxis signal transduction system that modulates chemotaxis in response to various stimuli. Catalyzes the demethylation of specific methylglutamate residues introduced into the chemoreceptors (methyl-accepting chemotaxis proteins or MCP) by CheR. Also mediates the irreversible deamidation of specific glutamine residues to glutamic acid. This chain is Protein-glutamate methylesterase/protein-glutamine glutaminase 2, found in Caulobacter vibrioides (strain ATCC 19089 / CIP 103742 / CB 15) (Caulobacter crescentus).